We begin with the raw amino-acid sequence, 405 residues long: Bifunctional enzyme IspD/IspF (405 aa).

Positions 1-240 (MTLADKPVLS…KLLLDEPKYR (240 aa)) are 2-C-methyl-D-erythritol 4-phosphate cytidylyltransferase. Residues 240-405 (RVGTGYDIHR…LLYKIAPLHN (166 aa)) form a 2-C-methyl-D-erythritol 2,4-cyclodiphosphate synthase region. Residues Asp-246 and His-248 each contribute to the a divalent metal cation site. 4-CDP-2-C-methyl-D-erythritol 2-phosphate is bound by residues 246 to 248 (DIH) and 277 to 278 (HS). Position 285 (His-285) interacts with a divalent metal cation. Residues 299-301 (DIG), 375-378 (TTTE), and Arg-385 contribute to the 4-CDP-2-C-methyl-D-erythritol 2-phosphate site.

In the N-terminal section; belongs to the IspD/TarI cytidylyltransferase family. IspD subfamily. It in the C-terminal section; belongs to the IspF family. It depends on a divalent metal cation as a cofactor.

It carries out the reaction 2-C-methyl-D-erythritol 4-phosphate + CTP + H(+) = 4-CDP-2-C-methyl-D-erythritol + diphosphate. The catalysed reaction is 4-CDP-2-C-methyl-D-erythritol 2-phosphate = 2-C-methyl-D-erythritol 2,4-cyclic diphosphate + CMP. Its pathway is isoprenoid biosynthesis; isopentenyl diphosphate biosynthesis via DXP pathway; isopentenyl diphosphate from 1-deoxy-D-xylulose 5-phosphate: step 2/6. The protein operates within isoprenoid biosynthesis; isopentenyl diphosphate biosynthesis via DXP pathway; isopentenyl diphosphate from 1-deoxy-D-xylulose 5-phosphate: step 4/6. Functionally, bifunctional enzyme that catalyzes the formation of 4-diphosphocytidyl-2-C-methyl-D-erythritol from CTP and 2-C-methyl-D-erythritol 4-phosphate (MEP) (IspD), and catalyzes the conversion of 4-diphosphocytidyl-2-C-methyl-D-erythritol 2-phosphate (CDP-ME2P) to 2-C-methyl-D-erythritol 2,4-cyclodiphosphate (ME-CPP) with a corresponding release of cytidine 5-monophosphate (CMP) (IspF). The polypeptide is Bifunctional enzyme IspD/IspF (Wolbachia sp. subsp. Brugia malayi (strain TRS)).